A 452-amino-acid polypeptide reads, in one-letter code: Disintegrin and metalloproteinase domain-containing protein 11 (452 aa).

In terms of domain architecture, Peptidase M12B spans 1–120; the sequence is RRHHSPLLVS…GGGSCLFNKP (120 aa). Residues 1-417 are Extracellular-facing; sequence RRHHSPLLVS…EKYKGPSGTN (417 aa). 3 cysteine pairs are disulfide-bonded: cysteine 31–cysteine 115, cysteine 74–cysteine 99, and cysteine 76–cysteine 83. Positions 126 to 214 constitute a Disintegrin domain; it reads PPSCGNGFIE…ACPANLHKQD (89 aa). Asparagine 149 is a glycosylation site (N-linked (GlcNAc...) asparagine). Residues cysteine 186 and cysteine 206 are joined by a disulfide bond. N-linked (GlcNAc...) asparagine glycosylation is found at asparagine 288 and asparagine 356. Intrachain disulfides connect cysteine 360-cysteine 375, cysteine 369-cysteine 381, and cysteine 383-cysteine 392. In terms of domain architecture, EGF-like spans 360-416; that stretch reads CPGSWNGVICSDHGVCSNEGKCICHPEWTGKDCSVYDPLPVPKPTGVVEKYKGPSGT. The chain crosses the membrane as a helical span at residues 418–438; it reads IIIGSIAGAVLIAAIVLGGTG. Topologically, residues 439-452 are cytoplasmic; that stretch reads WGFKNIRRGRSGGG.

In terms of processing, the precursor is cleaved by a furin endopeptidase. Detected in testis and barely expressed in heart and muscle. Not detectable in liver.

It is found in the presynaptic cell membrane. It localises to the perikaryon. Its subcellular location is the cell projection. The protein localises to the axon. Probable ligand for integrin in the brain. This is a non-catalytic metalloprotease-like protein. In Xenopus laevis (African clawed frog), this protein is Disintegrin and metalloproteinase domain-containing protein 11 (adam11).